A 543-amino-acid polypeptide reads, in one-letter code: T-complex protein 1 subunit eta (543 aa).

N-acetylmethionine is present on Met-1. ADP is bound at residue Gly-41. Gly-41 is a binding site for ATP. Residue Lys-67 is modified to N6-acetyllysine. Asp-92 serves as a coordination point for Mg(2+). 6 residues coordinate ADP: Gly-93, Thr-94, Thr-95, Ser-96, Ser-164, and Ser-165. Residue Gly-93 participates in ATP binding. Residue Ser-96 coordinates ATP. Lys-250 and Lys-320 each carry N6-acetyllysine. ATP-binding residues include Arg-398 and Gly-409. ADP is bound at residue Gly-409. Lys-430 participates in a covalent cross-link: Glycyl lysine isopeptide (Lys-Gly) (interchain with G-Cter in SUMO2). Residues Glu-494 and Arg-499 each coordinate ADP. Position 499 (Arg-499) interacts with ATP. An Omega-N-methylarginine modification is found at Arg-535.

The protein belongs to the TCP-1 chaperonin family. Component of the chaperonin-containing T-complex (TRiC), a hexadecamer composed of two identical back-to-back stacked rings enclosing a protein folding chamber. Each ring is made up of eight different subunits: TCP1/CCT1, CCT2, CCT3, CCT4, CCT5, CCT6A/CCT6, CCT7, CCT8. Interacts with PACRG. Interacts with DLEC1.

Its subcellular location is the cytoplasm. It catalyses the reaction ATP + H2O = ADP + phosphate + H(+). Its function is as follows. Component of the chaperonin-containing T-complex (TRiC), a molecular chaperone complex that assists the folding of actin, tubulin and other proteins upon ATP hydrolysis. The TRiC complex mediates the folding of WRAP53/TCAB1, thereby regulating telomere maintenance. This is T-complex protein 1 subunit eta (CCT7) from Pongo abelii (Sumatran orangutan).